A 331-amino-acid polypeptide reads, in one-letter code: MKTNAVAFEKFVNLADARLGTKIISVTDDWFADANRLFQPTPAVWKEGIFDDNGKWMDGWESRRKRFEGYDSAVIRLGVAGSIKGVDIDTSFFTGNFPPSASLEACFLAAGEPDENTQWTEVLPAVELQGNSHHYHEIHNHQPFSHLRFNIYPDGGVARLRVYGIPYRDWSAIGDDEQVDLAAALNGGRALACSDEHFGRMGNLLNPGRGINMGDGWETARRRTPGNDWVIIALGHAGEIEKIIVDTLHFKGNYPDSCSIQGAFVKGGTDSQIETQSLFWRELLPSQKLEMHAEHSFVEQIRALGPITHVRLNVFPDGGVSRLRLLGKVKK.

It belongs to the allantoicase family.

It carries out the reaction allantoate + H2O = (S)-ureidoglycolate + urea. Its pathway is nitrogen metabolism; (S)-allantoin degradation; (S)-ureidoglycolate from allantoate (aminidohydrolase route): step 1/1. The polypeptide is Probable allantoicase (Pseudomonas fluorescens (strain ATCC BAA-477 / NRRL B-23932 / Pf-5)).